Here is a 218-residue protein sequence, read N- to C-terminus: Capsid protein (218 aa).

The segment at 1-28 (MDKSESTSAGRNRRRRPRRGSRSAPSSA) is disordered. Basic residues predominate over residues 11–21 (RNRRRRPRRGS).

This sequence belongs to the cucumovirus capsid protein family.

It localises to the virion. Functionally, capsid protein. Probably binds RNA and plays a role in packaging. This chain is Capsid protein, found in Cucurbita pepo (Vegetable marrow).